The primary structure comprises 516 residues: 2,3-bisphosphoglycerate-independent phosphoglycerate mutase (516 aa).

Positions 14 and 64 each coordinate Mn(2+). Ser64 acts as the Phosphoserine intermediate in catalysis. Substrate-binding positions include His125, 155–156 (RD), Arg187, Arg193, 263–266 (RPDR), and Lys337. Asp404, His408, Asp445, His446, and His464 together coordinate Mn(2+).

The protein belongs to the BPG-independent phosphoglycerate mutase family. As to quaternary structure, monomer. Mn(2+) is required as a cofactor.

It catalyses the reaction (2R)-2-phosphoglycerate = (2R)-3-phosphoglycerate. It participates in carbohydrate degradation; glycolysis; pyruvate from D-glyceraldehyde 3-phosphate: step 3/5. In terms of biological role, catalyzes the interconversion of 2-phosphoglycerate and 3-phosphoglycerate. The protein is 2,3-bisphosphoglycerate-independent phosphoglycerate mutase of Saccharophagus degradans (strain 2-40 / ATCC 43961 / DSM 17024).